The following is a 438-amino-acid chain: 26S proteasome regulatory subunit 7 homolog (438 aa).

The segment covering 1–15 (MPPKEDWEKYQKPVD) has biased composition (basic and acidic residues). A disordered region spans residues 1 to 31 (MPPKEDWEKYQKPVDTEEENDKNPPPLDEGD). At Ser-90 the chain carries Phosphoserine. An ATP-binding site is contributed by 220–227 (GPPGTGKT).

The protein belongs to the AAA ATPase family.

The protein localises to the cytoplasm. Its subcellular location is the nucleus. Its function is as follows. The 26S proteasome is involved in the ATP-dependent degradation of ubiquitinated proteins. The regulatory (or ATPase) complex confers ATP dependency and substrate specificity to the 26S complex. This is 26S proteasome regulatory subunit 7 homolog (rpt1) from Schizosaccharomyces pombe (strain 972 / ATCC 24843) (Fission yeast).